We begin with the raw amino-acid sequence, 630 residues long: Conserved oligomeric Golgi complex subunit 6 (630 aa).

Belongs to the COG6 family. Component of the conserved oligomeric Golgi complex which is composed of eight different subunits and is required for normal Golgi morphology and localization.

It localises to the golgi apparatus membrane. Required for normal Golgi function. The polypeptide is Conserved oligomeric Golgi complex subunit 6 (Drosophila melanogaster (Fruit fly)).